We begin with the raw amino-acid sequence, 402 residues long: S-adenosylmethionine synthase (402 aa).

H16 provides a ligand contact to ATP. D18 contributes to the Mg(2+) binding site. E44 contributes to the K(+) binding site. The L-methionine site is built by E57 and Q103. Residues 103–113 (QSPDIAQGVDT) are flexible loop. ATP-binding positions include 178 to 180 (DGK), 249 to 250 (KF), D258, 264 to 265 (RK), A281, and K285. D258 is a binding site for L-methionine. L-methionine is bound at residue K289.

Belongs to the AdoMet synthase family. In terms of assembly, homotetramer; dimer of dimers. Requires Mg(2+) as cofactor. The cofactor is K(+).

It is found in the cytoplasm. It carries out the reaction L-methionine + ATP + H2O = S-adenosyl-L-methionine + phosphate + diphosphate. It functions in the pathway amino-acid biosynthesis; S-adenosyl-L-methionine biosynthesis; S-adenosyl-L-methionine from L-methionine: step 1/1. Functionally, catalyzes the formation of S-adenosylmethionine (AdoMet) from methionine and ATP. The overall synthetic reaction is composed of two sequential steps, AdoMet formation and the subsequent tripolyphosphate hydrolysis which occurs prior to release of AdoMet from the enzyme. This chain is S-adenosylmethionine synthase, found in Mycolicibacterium gilvum (strain PYR-GCK) (Mycobacterium gilvum (strain PYR-GCK)).